Consider the following 350-residue polypeptide: 4-hydroxy-3-methylbut-2-enyl diphosphate reductase (350 aa).

Cys19 contacts [4Fe-4S] cluster. His48 and His84 together coordinate (2E)-4-hydroxy-3-methylbut-2-enyl diphosphate. Dimethylallyl diphosphate is bound by residues His48 and His84. Residues His48 and His84 each contribute to the isopentenyl diphosphate site. A [4Fe-4S] cluster-binding site is contributed by Cys106. A (2E)-4-hydroxy-3-methylbut-2-enyl diphosphate-binding site is contributed by His134. His134 lines the dimethylallyl diphosphate pocket. An isopentenyl diphosphate-binding site is contributed by His134. Glu136 serves as the catalytic Proton donor. (2E)-4-hydroxy-3-methylbut-2-enyl diphosphate is bound at residue Thr175. Cys205 contributes to the [4Fe-4S] cluster binding site. Positions 233, 234, 235, and 278 each coordinate (2E)-4-hydroxy-3-methylbut-2-enyl diphosphate. The dimethylallyl diphosphate site is built by Ser233, Ser234, Asn235, and Ser278. Ser233, Ser234, Asn235, and Ser278 together coordinate isopentenyl diphosphate.

Belongs to the IspH family. [4Fe-4S] cluster serves as cofactor.

It carries out the reaction isopentenyl diphosphate + 2 oxidized [2Fe-2S]-[ferredoxin] + H2O = (2E)-4-hydroxy-3-methylbut-2-enyl diphosphate + 2 reduced [2Fe-2S]-[ferredoxin] + 2 H(+). The catalysed reaction is dimethylallyl diphosphate + 2 oxidized [2Fe-2S]-[ferredoxin] + H2O = (2E)-4-hydroxy-3-methylbut-2-enyl diphosphate + 2 reduced [2Fe-2S]-[ferredoxin] + 2 H(+). It participates in isoprenoid biosynthesis; dimethylallyl diphosphate biosynthesis; dimethylallyl diphosphate from (2E)-4-hydroxy-3-methylbutenyl diphosphate: step 1/1. The protein operates within isoprenoid biosynthesis; isopentenyl diphosphate biosynthesis via DXP pathway; isopentenyl diphosphate from 1-deoxy-D-xylulose 5-phosphate: step 6/6. Its function is as follows. Catalyzes the conversion of 1-hydroxy-2-methyl-2-(E)-butenyl 4-diphosphate (HMBPP) into a mixture of isopentenyl diphosphate (IPP) and dimethylallyl diphosphate (DMAPP). Acts in the terminal step of the DOXP/MEP pathway for isoprenoid precursor biosynthesis. In Brucella anthropi (strain ATCC 49188 / DSM 6882 / CCUG 24695 / JCM 21032 / LMG 3331 / NBRC 15819 / NCTC 12168 / Alc 37) (Ochrobactrum anthropi), this protein is 4-hydroxy-3-methylbut-2-enyl diphosphate reductase.